A 379-amino-acid chain; its full sequence is Pectin lyase B (379 aa).

A signal peptide spans 1-19 (MRLHAPILSLLAAAASTSA). Intrachain disulfides connect cysteine 82-cysteine 101 and cysteine 91-cysteine 225. Asparagine 128 is a glycosylation site (N-linked (GlcNAc...) asparagine). Residue arginine 255 is part of the active site. A disulfide bridge links cysteine 322 with cysteine 330.

It belongs to the polysaccharide lyase 1 family.

It localises to the secreted. The enzyme catalyses Eliminative cleavage of (1-&gt;4)-alpha-D-galacturonan methyl ester to give oligosaccharides with 4-deoxy-6-O-methyl-alpha-D-galact-4-enuronosyl groups at their non-reducing ends.. Functionally, pectinolytic enzymes consist of four classes of enzymes: pectin lyase, polygalacturonase, pectin methylesterase and rhamnogalacturonase. Among pectinolytic enzymes, pectin lyase is the most important in depolymerization of pectin, since it cleaves internal glycosidic bonds of highly methylated pectins. This is Pectin lyase B (pelB) from Emericella nidulans (strain FGSC A4 / ATCC 38163 / CBS 112.46 / NRRL 194 / M139) (Aspergillus nidulans).